The primary structure comprises 303 residues: N-acetyl-D-glucosamine kinase (303 aa).

ATP contacts are provided by residues 4–11 (GFDIGGTK) and 133–140 (GVGGGLIF). Zn(2+)-binding residues include histidine 157, cysteine 177, cysteine 179, and cysteine 184.

This sequence belongs to the ROK (NagC/XylR) family. NagK subfamily.

It carries out the reaction N-acetyl-D-glucosamine + ATP = N-acetyl-D-glucosamine 6-phosphate + ADP + H(+). The protein operates within cell wall biogenesis; peptidoglycan recycling. Functionally, catalyzes the phosphorylation of N-acetyl-D-glucosamine (GlcNAc) derived from cell-wall degradation, yielding GlcNAc-6-P. The polypeptide is N-acetyl-D-glucosamine kinase (Escherichia coli (strain K12 / DH10B)).